The following is a 370-amino-acid chain: DNA replication and repair protein RecF (370 aa).

30 to 37 (GQNGMGKT) serves as a coordination point for ATP.

This sequence belongs to the RecF family.

The protein resides in the cytoplasm. In terms of biological role, the RecF protein is involved in DNA metabolism; it is required for DNA replication and normal SOS inducibility. RecF binds preferentially to single-stranded, linear DNA. It also seems to bind ATP. In Bacteroides fragilis (strain ATCC 25285 / DSM 2151 / CCUG 4856 / JCM 11019 / LMG 10263 / NCTC 9343 / Onslow / VPI 2553 / EN-2), this protein is DNA replication and repair protein RecF.